The chain runs to 238 residues: LexA repressor (238 aa).

The H-T-H motif DNA-binding region spans Phe26–Thr46. Active-site for autocatalytic cleavage activity residues include Ser159 and Lys197.

This sequence belongs to the peptidase S24 family. As to quaternary structure, homodimer.

The catalysed reaction is Hydrolysis of Ala-|-Gly bond in repressor LexA.. In terms of biological role, represses a number of genes involved in the response to DNA damage (SOS response), including recA and lexA. In the presence of single-stranded DNA, RecA interacts with LexA causing an autocatalytic cleavage which disrupts the DNA-binding part of LexA, leading to derepression of the SOS regulon and eventually DNA repair. This Rhodobacter capsulatus (Rhodopseudomonas capsulata) protein is LexA repressor.